The following is a 133-amino-acid chain: Small ribosomal subunit protein uS8 (133 aa).

The tract at residues 1–30 (MANHDPISDMLTRIRNASEKRHETTKVPAS) is disordered. Positions 16-25 (NASEKRHETT) are enriched in basic and acidic residues.

Belongs to the universal ribosomal protein uS8 family. Part of the 30S ribosomal subunit. Contacts proteins S5 and S12.

Functionally, one of the primary rRNA binding proteins, it binds directly to 16S rRNA central domain where it helps coordinate assembly of the platform of the 30S subunit. This is Small ribosomal subunit protein uS8 from Synechococcus sp. (strain CC9902).